We begin with the raw amino-acid sequence, 317 residues long: Carbonic anhydrase 5B, mitochondrial (317 aa).

The N-terminal 33 residues, 1-33 (MVVMNSLRVILQASPGKLLWRKFQIPRFMPARP), are a transit peptide targeting the mitochondrion. An Alpha-carbonic anhydrase domain is found at 37-296 (YTCTYKTRNR…LMNRTVRSSF (260 aa)). Residues histidine 130, histidine 132, and histidine 155 each contribute to the Zn(2+) site. 235 to 236 (TT) provides a ligand contact to substrate.

The protein belongs to the alpha-carbonic anhydrase family. Requires Zn(2+) as cofactor. In terms of tissue distribution, strongest expression in heart, pancreas, kidney, placenta, lung, and skeletal muscle. Not expressed in liver.

It localises to the mitochondrion. The catalysed reaction is hydrogencarbonate + H(+) = CO2 + H2O. Its activity is regulated as follows. Inhibited by coumarins, sulfonamide derivatives such as acetazolamide (AZA), saccharin and Foscarnet (phosphonoformate trisodium salt). Functionally, mitochondrial carbonic anhydrase that catalyzes the reversible conversion of carbon dioxide to bicarbonate/HCO3. This chain is Carbonic anhydrase 5B, mitochondrial (CA5B), found in Homo sapiens (Human).